The chain runs to 366 residues: Histidinol-phosphate aminotransferase 2 (366 aa).

K226 is modified (N6-(pyridoxal phosphate)lysine).

It belongs to the class-II pyridoxal-phosphate-dependent aminotransferase family. Histidinol-phosphate aminotransferase subfamily. Homodimer. Requires pyridoxal 5'-phosphate as cofactor.

It carries out the reaction L-histidinol phosphate + 2-oxoglutarate = 3-(imidazol-4-yl)-2-oxopropyl phosphate + L-glutamate. It functions in the pathway amino-acid biosynthesis; L-histidine biosynthesis; L-histidine from 5-phospho-alpha-D-ribose 1-diphosphate: step 7/9. The sequence is that of Histidinol-phosphate aminotransferase 2 from Haemophilus influenzae (strain 86-028NP).